The sequence spans 179 residues: Large ribosomal subunit protein uL5 (179 aa).

This sequence belongs to the universal ribosomal protein uL5 family. In terms of assembly, part of the 50S ribosomal subunit; part of the 5S rRNA/L5/L18/L25 subcomplex. Contacts the 5S rRNA and the P site tRNA. Forms a bridge to the 30S subunit in the 70S ribosome.

This is one of the proteins that bind and probably mediate the attachment of the 5S RNA into the large ribosomal subunit, where it forms part of the central protuberance. In the 70S ribosome it contacts protein S13 of the 30S subunit (bridge B1b), connecting the 2 subunits; this bridge is implicated in subunit movement. Contacts the P site tRNA; the 5S rRNA and some of its associated proteins might help stabilize positioning of ribosome-bound tRNAs. The polypeptide is Large ribosomal subunit protein uL5 (Burkholderia ambifaria (strain MC40-6)).